The following is a 117-amino-acid chain: UPF0102 protein FTF0898c (117 aa).

This sequence belongs to the UPF0102 family.

This is UPF0102 protein FTF0898c from Francisella tularensis subsp. tularensis (strain FSC 198).